The primary structure comprises 136 residues: Small ribosomal subunit protein uS11c (136 aa).

It belongs to the universal ribosomal protein uS11 family. In terms of assembly, part of the 30S ribosomal subunit.

It is found in the plastid. Its subcellular location is the chloroplast. This chain is Small ribosomal subunit protein uS11c, found in Guizotia abyssinica (Niger).